Reading from the N-terminus, the 96-residue chain is Small ribosomal subunit protein bS6c (96 aa).

This sequence belongs to the bacterial ribosomal protein bS6 family.

It localises to the plastid. The protein localises to the chloroplast. In terms of biological role, binds together with bS18 to 16S ribosomal RNA. In Guillardia theta (Cryptophyte), this protein is Small ribosomal subunit protein bS6c (rps6).